The chain runs to 205 residues: Holliday junction branch migration complex subunit RuvA (205 aa).

The tract at residues 1 to 64 (MIGKLKGTID…EDQLKLFGFM (64 aa)) is domain I. The segment at 65-143 (SALEREWFNL…AFTGDAGSAI (79 aa)) is domain II. The segment at 144-153 (GLKQELGEGV) is flexible linker. Positions 153-205 (VASAPVSDAVSALTNLGYSRDQAANAIAAALKNGGEGADSAKLIRLGLKELSR) are domain III.

This sequence belongs to the RuvA family. In terms of assembly, homotetramer. Forms an RuvA(8)-RuvB(12)-Holliday junction (HJ) complex. HJ DNA is sandwiched between 2 RuvA tetramers; dsDNA enters through RuvA and exits via RuvB. An RuvB hexamer assembles on each DNA strand where it exits the tetramer. Each RuvB hexamer is contacted by two RuvA subunits (via domain III) on 2 adjacent RuvB subunits; this complex drives branch migration. In the full resolvosome a probable DNA-RuvA(4)-RuvB(12)-RuvC(2) complex forms which resolves the HJ.

The protein resides in the cytoplasm. Functionally, the RuvA-RuvB-RuvC complex processes Holliday junction (HJ) DNA during genetic recombination and DNA repair, while the RuvA-RuvB complex plays an important role in the rescue of blocked DNA replication forks via replication fork reversal (RFR). RuvA specifically binds to HJ cruciform DNA, conferring on it an open structure. The RuvB hexamer acts as an ATP-dependent pump, pulling dsDNA into and through the RuvAB complex. HJ branch migration allows RuvC to scan DNA until it finds its consensus sequence, where it cleaves and resolves the cruciform DNA. This Allorhizobium ampelinum (strain ATCC BAA-846 / DSM 112012 / S4) (Agrobacterium vitis (strain S4)) protein is Holliday junction branch migration complex subunit RuvA.